The sequence spans 348 residues: Dehydrogenase orsE (348 aa).

Position 43–46 (43–46) interacts with NADP(+); sequence LDTH. A substrate-binding site is contributed by 130-137; the sequence is FAVEAAVC. Residues 180–183, 203–206, and 272–273 contribute to the NADP(+) site; these read SSSV, GAHN, and VH. 292–296 contacts substrate; that stretch reads NDIAT. 339–340 lines the NADP(+) pocket; that stretch reads VS.

It belongs to the zinc-containing alcohol dehydrogenase family. As to quaternary structure, monomer.

Functionally, dehydrogenase; part of the gene cluster that mediates the biosynthesis of orsellinic acid, as well as of the cathepsin K inhibitors F9775 A and F9775 B. The non-reducing polyketide synthase orsA produces orsellinic acid by condensing acetyl-CoA with 3 malonyl-CoA units. Further modifications by the decarboxylase orsB and the tyrosinase-like protein orsC lead to the production of F9775 A and F9775 B. The functions of orsD and orsE remain unclear since only orsB and orsC are required to convert orsellinic acid into F9775 A and F9775 B. In Emericella nidulans (strain FGSC A4 / ATCC 38163 / CBS 112.46 / NRRL 194 / M139) (Aspergillus nidulans), this protein is Dehydrogenase orsE.